The following is a 178-amino-acid chain: ATP-dependent protease subunit HslV (178 aa).

Thr7 is a catalytic residue. Na(+) is bound by residues Gly162, Cys165, and Thr168.

This sequence belongs to the peptidase T1B family. HslV subfamily. As to quaternary structure, a double ring-shaped homohexamer of HslV is capped on each side by a ring-shaped HslU homohexamer. The assembly of the HslU/HslV complex is dependent on binding of ATP.

The protein localises to the cytoplasm. It catalyses the reaction ATP-dependent cleavage of peptide bonds with broad specificity.. Its activity is regulated as follows. Allosterically activated by HslU binding. Protease subunit of a proteasome-like degradation complex believed to be a general protein degrading machinery. This is ATP-dependent protease subunit HslV from Sulfurihydrogenibium sp. (strain YO3AOP1).